The chain runs to 212 residues: Pyridoxine/pyridoxamine 5'-phosphate oxidase (212 aa).

Substrate is bound by residues R8 to Y11 and K66. Residues R61 to K66, F76 to T77, R82, K83, and Q105 contribute to the FMN site. 3 residues coordinate substrate: Y123, R127, and S131. FMN is bound by residues Q140 to S141 and W184. R190 to H192 contributes to the substrate binding site. Residue R194 participates in FMN binding.

This sequence belongs to the pyridoxamine 5'-phosphate oxidase family. As to quaternary structure, homodimer. It depends on FMN as a cofactor.

The enzyme catalyses pyridoxamine 5'-phosphate + O2 + H2O = pyridoxal 5'-phosphate + H2O2 + NH4(+). It catalyses the reaction pyridoxine 5'-phosphate + O2 = pyridoxal 5'-phosphate + H2O2. It participates in cofactor metabolism; pyridoxal 5'-phosphate salvage; pyridoxal 5'-phosphate from pyridoxamine 5'-phosphate: step 1/1. It functions in the pathway cofactor metabolism; pyridoxal 5'-phosphate salvage; pyridoxal 5'-phosphate from pyridoxine 5'-phosphate: step 1/1. Its function is as follows. Catalyzes the oxidation of either pyridoxine 5'-phosphate (PNP) or pyridoxamine 5'-phosphate (PMP) into pyridoxal 5'-phosphate (PLP). This is Pyridoxine/pyridoxamine 5'-phosphate oxidase from Cupriavidus necator (strain ATCC 17699 / DSM 428 / KCTC 22496 / NCIMB 10442 / H16 / Stanier 337) (Ralstonia eutropha).